We begin with the raw amino-acid sequence, 520 residues long: NADH-quinone oxidoreductase subunit N (520 aa).

Helical transmembrane passes span 13-33 (ALLP…ASVW), 55-75 (FGVI…GDGA), 87-107 (GFRW…LMLL), 115-135 (AAFG…MMVL), 141-161 (LMFV…LAGV), 176-196 (FLLG…LFGA), 219-239 (FMSG…AAPF), 250-270 (APLP…FAVF), 285-305 (WHMG…VFAL), 313-333 (MLAY…IVGD), 339-359 (ALIF…GVLI), 383-403 (WLAI…VLGG), 425-445 (ILAV…LAVV), and 468-488 (SLIA…TPIM). Residues 494-508 (ATTTTSPTSNPAAPR) are compositionally biased toward low complexity. The disordered stretch occupies residues 494–520 (ATTTTSPTSNPAAPRGEVRLQTASVPR).

The protein belongs to the complex I subunit 2 family. In terms of assembly, NDH-1 is composed of 14 different subunits. Subunits NuoA, H, J, K, L, M, N constitute the membrane sector of the complex.

The protein localises to the cell inner membrane. It catalyses the reaction a quinone + NADH + 5 H(+)(in) = a quinol + NAD(+) + 4 H(+)(out). In terms of biological role, NDH-1 shuttles electrons from NADH, via FMN and iron-sulfur (Fe-S) centers, to quinones in the respiratory chain. The immediate electron acceptor for the enzyme in this species is believed to be ubiquinone. Couples the redox reaction to proton translocation (for every two electrons transferred, four hydrogen ions are translocated across the cytoplasmic membrane), and thus conserves the redox energy in a proton gradient. The chain is NADH-quinone oxidoreductase subunit N from Gemmatimonas aurantiaca (strain DSM 14586 / JCM 11422 / NBRC 100505 / T-27).